Reading from the N-terminus, the 1024-residue chain is Multidrug resistance protein MdtC (1024 aa).

Helical transmembrane passes span 12–32 (VATT…FSLL), 333–353 (EVER…FIFL), 360–380 (LIPA…MYLC), 387–407 (LSLM…IVVL), 435–455 (VLSM…MAGL), 469–489 (VAIG…CAWL), 528–548 (WVMV…ISIP), 853–873 (LWLI…LYES), 875–895 (VHPL…LLAL), 897–917 (LFDA…IGIV), 953–973 (PIIM…LSSG), and 984–1004 (ITIV…TPVI).

This sequence belongs to the resistance-nodulation-cell division (RND) (TC 2.A.6) family. MdtC subfamily. As to quaternary structure, part of a tripartite efflux system composed of MdtA, MdtB and MdtC. MdtC forms a heteromultimer with MdtB.

It localises to the cell inner membrane. The sequence is that of Multidrug resistance protein MdtC from Yersinia pseudotuberculosis serotype IB (strain PB1/+).